A 256-amino-acid polypeptide reads, in one-letter code: UPF0280 protein MTH_727 (256 aa).

The protein belongs to the UPF0280 family.

The chain is UPF0280 protein MTH_727 from Methanothermobacter thermautotrophicus (strain ATCC 29096 / DSM 1053 / JCM 10044 / NBRC 100330 / Delta H) (Methanobacterium thermoautotrophicum).